Reading from the N-terminus, the 495-residue chain is MKSQLLSLAVAVTTISQGVVGQEPFGWPFKPMVTQDDLQNKIKLKDIMAGVEKLQSFSDAHPEKNRVFGGNGHKDTVEWIYNEIKATGYYDVKKQEQVHLWSHAEAAVSANGKELKASAMSYSPPASKIMAELVVAKNNGCNATDYPENTQGKIVLVERGVCSFGEKSSQAGDAKAAGAIVYNNVPGSLAGTLGGLDKRHVPTAGLSQEDGKNLATLIASGKVDVTMNVISLFENRTTWNVIAETKGGDHNNVVMLGAHSDSVDAGPGINDNGSGSIGIMTVAKALTNFKLNNAVRFAWWTAEEFGLLGSTFYVNSLDDRELHKVKLYLNFDMIGSPNFANQIYDGDGSAYNMTGPAGSAEIEYLFEKFFDDQGIPHQPTAFTGRSDYSAFIKRNVPAGGLFTGAEVVKTPEQVKLFGGEAGVAYDKNYHGKGDTVANINKGAIFLNTRAIAYAIAEYARSLKGFPTRPKTGKRDVNPQYSKMPGGGCGHHTVFM.

The N-terminal stretch at 1–21 (MKSQLLSLAVAVTTISQGVVG) is a signal peptide. The 87-residue stretch at 130 to 216 (MAELVVAKNN…SQEDGKNLAT (87 aa)) folds into the PA domain. 2 N-linked (GlcNAc...) asparagine glycosylation sites follow: Asn142 and Asn235. His259 and Asp271 together coordinate Zn(2+). A glycan (N-linked (GlcNAc...) asparagine) is linked at Asn272. Glu303 acts as the Proton acceptor in catalysis. 2 residues coordinate Zn(2+): Glu304 and Asp332. An N-linked (GlcNAc...) asparagine glycan is attached at Asn352. Position 430 (His430) interacts with Zn(2+).

This sequence belongs to the peptidase M28 family. M28A subfamily. Monomer. The cofactor is Zn(2+).

The protein localises to the secreted. Its function is as follows. Extracellular aminopeptidase that releases a wide variety of amino acids from natural peptides and contributes to pathogenicity. In Arthroderma benhamiae (strain ATCC MYA-4681 / CBS 112371) (Trichophyton mentagrophytes), this protein is Probable leucine aminopeptidase 2 (LAP2).